The sequence spans 231 residues: Transcriptional regulator NRG1 (231 aa).

Serine 163 is modified (phosphoserine). C2H2-type zinc fingers lie at residues 174–196 (YICK…NRIH) and 202–226 (HCCP…YRTH).

It localises to the nucleus. In terms of biological role, transcriptional repressor involved in regulation of glucose repression. Binds to UAS-1 in the STA1 promoter. The polypeptide is Transcriptional regulator NRG1 (NRG1) (Saccharomyces cerevisiae (strain ATCC 204508 / S288c) (Baker's yeast)).